The sequence spans 1879 residues: Protein TIC 214 (1879 aa).

6 consecutive transmembrane segments (helical) span residues 18–38 (IINS…FSIG), 64–84 (FITG…HLAL), 87–107 (PYTI…WTNP), 124–144 (LSIQ…HFIL), 172–192 (VGWL…LVWI), and 218–238 (IAPI…GRIP). 2 disordered regions span residues 245–305 (ETSK…IDET) and 586–702 (ISTS…DEPM). Composition is skewed to acidic residues over residues 253-268 (AETE…EIET) and 295-305 (EKEDPDKIDET). Over residues 586–688 (ISTSTPTSTP…SIPASTSTST (103 aa)) the composition is skewed to low complexity. Residues 691 to 701 (IKSKDEPKDEP) show a composition bias toward basic and acidic residues.

This sequence belongs to the TIC214 family. In terms of assembly, part of the Tic complex.

It localises to the plastid. The protein localises to the chloroplast inner membrane. Involved in protein precursor import into chloroplasts. May be part of an intermediate translocation complex acting as a protein-conducting channel at the inner envelope. This chain is Protein TIC 214, found in Cucumis sativus (Cucumber).